We begin with the raw amino-acid sequence, 496 residues long: Acyltransferase clz6 (496 aa).

His-163 acts as the Proton acceptor in catalysis.

The protein belongs to the plant acyltransferase family. In terms of assembly, monomer.

Its pathway is secondary metabolite biosynthesis. Acyltransferase; part of the gene cluster that mediates the biosynthesis of squalestatin S1 (SQS1, also known as zaragozic acid A), a heavily oxidized fungal polyketide that offers potent cholesterol lowering activity by targeting squalene synthase (SS). SQS1 is composed of a 2,8-dioxobicyclic[3.2.1]octane-3,4,5-tricarboxyclic acid core that is connected to two lipophilic polyketide arms. These initial steps feature the priming of an unusual benzoic acid starter unit onto the highly reducing polyketide synthase clz14, followed by oxaloacetate extension and product release to generate a tricarboxylic acid containing product. The phenylalanine ammonia lyase (PAL) clz10 and the acyl-CoA ligase clz12 are involved in transforming phenylalanine into benzoyl-CoA. The citrate synthase-like protein clz17 is involved in connecting the C-alpha-carbons of the hexaketide chain and oxaloacetate to afford the tricarboxylic acid unit. The potential hydrolytic enzymes, clz11 and clz13, are in close proximity to pks2 and may participate in product release. On the other side, the tetraketide arm is synthesized by a the squalestatin tetraketide synthase clz2 and enzymatically esterified to the core in the last biosynthetic step, by the acetyltransferase clz6. The biosynthesis of the tetraketide must involve 3 rounds of chain extension. After the first and second rounds methyl-transfer occurs, and in all rounds of extension the ketoreductase and dehydratase are active. The enoyl reductase and C-MeT of clz2 are not active in the final round of extension. The acetyltransferase clz6 appears to have a broad substrate selectivity for its acyl CoA substrate, allowing the in vitro synthesis of novel squalestatins. The biosynthesis of SQS1 requires several oxidative steps likely performed by oxidoreductases clz3, clz15 and clz16. Finally, in support of the identification of the cluster as being responsible for SQS1 production, the cluster contains a gene encoding a putative squalene synthase (SS) clz20, suggesting a likely mechanism for self-resistance. This chain is Acyltransferase clz6, found in Cochliobolus lunatus (Filamentous fungus).